The primary structure comprises 532 residues: Protoporphyrinogen oxidase (532 aa).

FAD is bound by residues 9-14 (GSGISG), isoleucine 289, and 511-513 (VGI).

It belongs to the protoporphyrinogen/coproporphyrinogen oxidase family. Protoporphyrinogen oxidase subfamily. Requires FAD as cofactor.

It localises to the mitochondrion. It catalyses the reaction protoporphyrinogen IX + 3 O2 = protoporphyrin IX + 3 H2O2. It functions in the pathway porphyrin-containing compound metabolism; protoporphyrin-IX biosynthesis; protoporphyrin-IX from protoporphyrinogen-IX: step 1/1. Catalyzes the 6-electron oxidation of protoporphyrinogen-IX to form protoporphyrin-IX. In Dictyostelium discoideum (Social amoeba), this protein is Protoporphyrinogen oxidase (ppox).